The primary structure comprises 676 residues: UvrABC system protein B (676 aa).

A Helicase ATP-binding domain is found at glutamate 26–valine 414. Glycine 39–threonine 46 contacts ATP. A Beta-hairpin motif is present at residues tyrosine 92–valine 115. A Helicase C-terminal domain is found at glutamine 432–leucine 598. A UVR domain is found at glutamate 636–glutamine 671.

It belongs to the UvrB family. As to quaternary structure, forms a heterotetramer with UvrA during the search for lesions. Interacts with UvrC in an incision complex.

The protein localises to the cytoplasm. The UvrABC repair system catalyzes the recognition and processing of DNA lesions. A damage recognition complex composed of 2 UvrA and 2 UvrB subunits scans DNA for abnormalities. Upon binding of the UvrA(2)B(2) complex to a putative damaged site, the DNA wraps around one UvrB monomer. DNA wrap is dependent on ATP binding by UvrB and probably causes local melting of the DNA helix, facilitating insertion of UvrB beta-hairpin between the DNA strands. Then UvrB probes one DNA strand for the presence of a lesion. If a lesion is found the UvrA subunits dissociate and the UvrB-DNA preincision complex is formed. This complex is subsequently bound by UvrC and the second UvrB is released. If no lesion is found, the DNA wraps around the other UvrB subunit that will check the other stand for damage. This chain is UvrABC system protein B, found in Aliivibrio fischeri (strain ATCC 700601 / ES114) (Vibrio fischeri).